The primary structure comprises 388 residues: Alpha-2B adrenergic receptor (388 aa).

A helical transmembrane segment spans residues 1 to 25 (AIAAVITFLILFTIFGNALVILAVL). Residues 26-36 (TSRSLRAPQNL) are Cytoplasmic-facing. The chain crosses the membrane as a helical span at residues 37 to 62 (FLVSLAAADILVATLIIPFSLANELL). Residues 63 to 72 (GYWYFRRTWC) are Extracellular-facing. A disulfide bond links Cys72 and Cys151. A helical transmembrane segment spans residues 73-95 (EVYLALDVLFCTSSIVHLCAISL). At 96–117 (DRYWAVSRALEYNSKRTPRXIK) the chain is on the cytoplasmic side. The helical transmembrane segment at 118–140 (CIILTVWLIAAAISLPPLIYKGD) threads the bilayer. Residues 141–156 (QGPQPRGRPQCKLNQE) lie on the Extracellular side of the membrane. The chain crosses the membrane as a helical span at residues 157–180 (AWYILSSSIGSFFAPCLIMILVYL). Residues 181–352 (RIYVIAKRSN…LTREKRFTFV (172 aa)) lie on the Cytoplasmic side of the membrane. A disordered region spans residues 193–309 (GPRAKGASRE…ASACNPPLQQ (117 aa)). The span at 239–249 (PTGEKEGKTPE) shows a compositional bias: basic and acidic residues. Positions 279–291 (PEEEAEEEEEECE) are enriched in acidic residues. Over residues 292-302 (PQAAPASSASA) the composition is skewed to low complexity. The helical transmembrane segment at 353–376 (LAVVIGVFVLCWFPFFFSYSLGAI) threads the bilayer. The Extracellular portion of the chain corresponds to 377–385 (CPQRCKVPH). Residues 386–388 (GLF) traverse the membrane as a helical segment.

This sequence belongs to the G-protein coupled receptor 1 family. Adrenergic receptor subfamily. ADRA2B sub-subfamily. As to quaternary structure, interacts with RAB26. Interacts with PPP1R9B.

It localises to the cell membrane. Functionally, alpha-2 adrenergic receptors mediate the catecholamine-induced inhibition of adenylate cyclase through the action of G proteins. In Orycteropus afer (Aardvark), this protein is Alpha-2B adrenergic receptor (ADRA2B).